We begin with the raw amino-acid sequence, 269 residues long: uncharacterized protein (269 aa).

The next 8 helical transmembrane spans lie at 9 to 29 (YIIG…AHLF), 50 to 70 (FMLG…IVPL), 82 to 102 (FSII…VWAF), 107 to 127 (LYWT…MYGQ), 147 to 167 (LVFG…LHCT), 173 to 193 (VFSN…ILGF), 200 to 220 (LVSA…HLFA), and 224 to 244 (IFAF…FLLP).

It localises to the membrane. This is an uncharacterized protein from Schizosaccharomyces pombe (strain 972 / ATCC 24843) (Fission yeast).